Reading from the N-terminus, the 923-residue chain is ATP-dependent Clp protease ATP-binding subunit ClpA homolog CD4B, chloroplastic (923 aa).

One can recognise a Clp R domain in the interval 92–234 (FERFTEKAIK…RTQVIRMVGE (143 aa)). 2 repeat regions span residues 95 to 160 (FTEK…IGRG) and 170 to 234 (FTPR…MVGE). Residues 255-502 (LEEYGTNLTK…RVRLRHAQLP (248 aa)) are i. 300 to 307 (GEPGVGKT) is a binding site for ATP. A UVR domain is found at 509–544 (EKELRQITKEKNEAVRGQDFEKAGELRDREMDLKAQ). The II stretch occupies residues 569-760 (VTEADIQHIV…LLIMTSNVGS (192 aa)). ATP is bound at residue 643–650 (GPTGVGKS).

Belongs to the ClpA/ClpB family.

It is found in the plastid. The protein resides in the chloroplast. May interact with a ClpP-like protease involved in degradation of denatured proteins in the chloroplast. The polypeptide is ATP-dependent Clp protease ATP-binding subunit ClpA homolog CD4B, chloroplastic (CD4B) (Solanum lycopersicum (Tomato)).